The sequence spans 377 residues: Ribosomal RNA large subunit methyltransferase G (377 aa).

This sequence belongs to the methyltransferase superfamily. RlmG family.

The protein localises to the cytoplasm. It catalyses the reaction guanosine(1835) in 23S rRNA + S-adenosyl-L-methionine = N(2)-methylguanosine(1835) in 23S rRNA + S-adenosyl-L-homocysteine + H(+). Specifically methylates the guanine in position 1835 (m2G1835) of 23S rRNA. In Shewanella sp. (strain ANA-3), this protein is Ribosomal RNA large subunit methyltransferase G.